Consider the following 830-residue polypeptide: Leucine--tRNA ligase (830 aa).

The 'HIGH' region motif lies at 34–44 (PYPSGNIHMGH). The 'KMSKS' region motif lies at 592–596 (KMSKS). Lys-595 serves as a coordination point for ATP.

This sequence belongs to the class-I aminoacyl-tRNA synthetase family.

The protein resides in the cytoplasm. The catalysed reaction is tRNA(Leu) + L-leucine + ATP = L-leucyl-tRNA(Leu) + AMP + diphosphate. This Ehrlichia ruminantium (strain Welgevonden) protein is Leucine--tRNA ligase.